Consider the following 559-residue polypeptide: MRYIELAQLYQKLEKTTMKLIKTRLVADFLKKVPEDHLEFIPYLILGDVFPEWDERELGVGEKLLIKAVSMATGIDSKEIENSVKDTGDLGESIALAVKRRKQKSFFSQPLTIKRVYQTLVKVAETTGEGSQDKKMKYLANLFMDAEPIEAKYIARTVLGTMRTGVAEGLLRDAISLAFNVKVELVERAYMLTSDFGFVAKIAKTEGNDGLAKVTIQIGKPIKPMLAQQAANIKEALLEMGGEAEFEIKYDGARVQVHKDGEKVTIYSRRLENVTRAIPEIVEAIKEALKPAKAIVEGELVAIGEDGRPLPFQYVLRRFRRKYNIEEMMEKIPLELNLFDVLYVDGVSLIDTKFMERRKKLEEIVEANGKVKIAENLITKNVEEAEQFYKRALEMGHEGLMAKRLDAIYEPGNRGKKWLKIKPTMENLDLVIIGAEWGEGRRAHLLGSFILGAYDPETGEFLEVGKVGSGFTDDDLVEFTKMLRPLIIKEEGKRVWIQPKVVIEVTYQEIQKSPKYRSGFALRFPRYVALREDKGPEDADTIERIAQLYELQERMKGKV.

Glu-247 lines the ATP pocket. Catalysis depends on Lys-249, which acts as the N6-AMP-lysine intermediate. ATP is bound by residues Arg-254, Arg-269, Glu-299, Phe-339, Arg-414, and Lys-420.

It belongs to the ATP-dependent DNA ligase family. The cofactor is Mg(2+).

The enzyme catalyses ATP + (deoxyribonucleotide)n-3'-hydroxyl + 5'-phospho-(deoxyribonucleotide)m = (deoxyribonucleotide)n+m + AMP + diphosphate.. Functionally, DNA ligase that seals nicks in double-stranded DNA during DNA replication, DNA recombination and DNA repair. This is DNA ligase from Pyrococcus abyssi.